Here is a 345-residue protein sequence, read N- to C-terminus: Peptidoglycan-recognition protein LE (345 aa).

A compositionally biased stretch (basic and acidic residues) spans 1-16; that stretch reads MSESGIKKLSQERTRE. The segment at 1–38 is disordered; the sequence is MSESGIKKLSQERTREWLASQEDEELESIAESSVVDSL. Asn-52, Asn-95, Asn-98, and Asn-106 each carry an N-linked (GlcNAc...) asparagine glycan. The interval 124 to 152 is disordered; that stretch reads NRRDRRHVSPPRDNAPKTPTHFEDDYQDE. One can recognise an N-acetylmuramoyl-L-alanine amidase domain in the interval 198-324; that stretch reads PVKYVVILHT…CQCNSTESPG (127 aa). Residues His-206, 229–240, Arg-254, 261–267, and 314–322 each bind peptidoglycan; these read HIESRGWNDIAY, AHTLGYN, and HCQCNSTES. A glycan (N-linked (GlcNAc...) asparagine) is linked at Asn-318.

Belongs to the N-acetylmuramoyl-L-alanine amidase 2 family. Monomer. Peptidoglycan binding induces oligomerization. As to expression, expressed in hemolymph. Localizes at the lumenal surface of the trachea (at protein level).

It localises to the secreted. In terms of biological role, peptidoglycan-recognition protein that plays a key role in innate immunity by binding to murein peptidoglycans (PGN) of Gram-negative bacteria and activating the imd/Relish pathway. Has no activity against on Gram-positive bacteria. Binds to diaminopimelic acid-type PGN (DAP-type PGN), an activator of the imd/Relish pathway. Functions synergistically with PGRP-LC in producing resistance to E.coli and B.megaterium infections, which have the DAP-type peptidoglycan. Acts both upstream and in parallel with PGRP-LC in the imd/Relish pathway, and is required for infection-dependent activation of melanization. Required for Relish processing and nuclear translocation following proteolytic cleavage. Its localization suggests a role in the recognition and subsequent activation of the signaling at the first point of contact with invading bacteria. The protein is Peptidoglycan-recognition protein LE (PGRP-LE) of Drosophila melanogaster (Fruit fly).